The chain runs to 690 residues: Methionine--tRNA ligase (690 aa).

Residues 12-22 (PYANGPLHLGH) carry the 'HIGH' region motif. Residues Cys144, Cys147, Cys157, and Cys160 each coordinate Zn(2+). A 'KMSKS' region motif is present at residues 333-337 (QFSKS). An ATP-binding site is contributed by Lys336. The region spanning 535–632 (KKINIDLMVG…VNADDGSRMK (98 aa)) is the tRNA-binding domain.

Belongs to the class-I aminoacyl-tRNA synthetase family. MetG type 1 subfamily. As to quaternary structure, homodimer. It depends on Zn(2+) as a cofactor.

The protein resides in the cytoplasm. It catalyses the reaction tRNA(Met) + L-methionine + ATP = L-methionyl-tRNA(Met) + AMP + diphosphate. Is required not only for elongation of protein synthesis but also for the initiation of all mRNA translation through initiator tRNA(fMet) aminoacylation. This Picrophilus torridus (strain ATCC 700027 / DSM 9790 / JCM 10055 / NBRC 100828 / KAW 2/3) protein is Methionine--tRNA ligase.